Here is a 224-residue protein sequence, read N- to C-terminus: Ribose-5-phosphate isomerase A 1 (224 aa).

Substrate is bound by residues 29 to 32 (SGST), 85 to 88 (DGAD), and 98 to 101 (KGGG). Glu107 serves as the catalytic Proton acceptor. A substrate-binding site is contributed by Lys125.

This sequence belongs to the ribose 5-phosphate isomerase family. Homodimer.

The catalysed reaction is aldehydo-D-ribose 5-phosphate = D-ribulose 5-phosphate. It participates in carbohydrate degradation; pentose phosphate pathway; D-ribose 5-phosphate from D-ribulose 5-phosphate (non-oxidative stage): step 1/1. Functionally, catalyzes the reversible conversion of ribose-5-phosphate to ribulose 5-phosphate. In Oceanobacillus iheyensis (strain DSM 14371 / CIP 107618 / JCM 11309 / KCTC 3954 / HTE831), this protein is Ribose-5-phosphate isomerase A 1.